We begin with the raw amino-acid sequence, 31 residues long: Cytochrome b6-f complex subunit 6 (31 aa).

Residues 4 to 24 (ITSYFGFLLAALTITSVLFIG) traverse the membrane as a helical segment.

The protein belongs to the PetL family. The 4 large subunits of the cytochrome b6-f complex are cytochrome b6, subunit IV (17 kDa polypeptide, PetD), cytochrome f and the Rieske protein, while the 4 small subunits are PetG, PetL, PetM and PetN. The complex functions as a dimer.

The protein resides in the plastid. Its subcellular location is the chloroplast thylakoid membrane. In terms of biological role, component of the cytochrome b6-f complex, which mediates electron transfer between photosystem II (PSII) and photosystem I (PSI), cyclic electron flow around PSI, and state transitions. PetL is important for photoautotrophic growth as well as for electron transfer efficiency and stability of the cytochrome b6-f complex. The sequence is that of Cytochrome b6-f complex subunit 6 from Arabidopsis thaliana (Mouse-ear cress).